A 462-amino-acid chain; its full sequence is Chromosomal replication initiator protein DnaA (462 aa).

The tract at residues 1-84 (MAVSLWQQCI…RFDIGSRPSA (84 aa)) is domain I, interacts with DnaA modulators. The domain II stretch occupies residues 84–125 (AKKPSVPAPIAPTRVANTQTKATVGTTFNVQAEPMANANHRS). Residues 126-342 (NINPSYQFDN…GALNRVIANA (217 aa)) form a domain III, AAA+ region region. ATP is bound by residues Gly170, Gly172, Lys173, and Thr174. Residues 343-462 (NFTGRPITID…YANLIRTLSS (120 aa)) are domain IV, binds dsDNA.

It belongs to the DnaA family. In terms of assembly, oligomerizes as a right-handed, spiral filament on DNA at oriC.

Its subcellular location is the cytoplasm. In terms of biological role, plays an essential role in the initiation and regulation of chromosomal replication. ATP-DnaA binds to the origin of replication (oriC) to initiate formation of the DNA replication initiation complex once per cell cycle. Binds the DnaA box (a 9 base pair repeat at the origin) and separates the double-stranded (ds)DNA. Forms a right-handed helical filament on oriC DNA; dsDNA binds to the exterior of the filament while single-stranded (ss)DNA is stabiized in the filament's interior. The ATP-DnaA-oriC complex binds and stabilizes one strand of the AT-rich DNA unwinding element (DUE), permitting loading of DNA polymerase. After initiation quickly degrades to an ADP-DnaA complex that is not apt for DNA replication. Binds acidic phospholipids. This is Chromosomal replication initiator protein DnaA from Shewanella baltica (strain OS195).